The chain runs to 244 residues: Phosphonates import ATP-binding protein PhnC 2 (244 aa).

The 239-residue stretch at 6-244 (IECHNLETAY…LQAQFVVNNQ (239 aa)) folds into the ABC transporter domain. An ATP-binding site is contributed by 41 to 48 (GLNGAGKS).

This sequence belongs to the ABC transporter superfamily. Phosphonates importer (TC 3.A.1.9.1) family. The complex is composed of two ATP-binding proteins (PhnC), two transmembrane proteins (PhnE) and a solute-binding protein (PhnD).

Its subcellular location is the cell inner membrane. It catalyses the reaction phosphonate(out) + ATP + H2O = phosphonate(in) + ADP + phosphate + H(+). Functionally, part of the ABC transporter complex PhnCDE involved in phosphonates import. Responsible for energy coupling to the transport system. The polypeptide is Phosphonates import ATP-binding protein PhnC 2 (Nostoc sp. (strain PCC 7120 / SAG 25.82 / UTEX 2576)).